The following is a 257-amino-acid chain: MELLGGPRVGNTESQLCVADGDDLPTYCSANSEDLNITTITTLSPTSMSHPQQVRDDQWVEPSDQLQGTAVFDATGDKATMPSWDELVRQHADRVYRLAYRLSGNQHDAEDLTQETFIRVFRSVQNYQPGTFEGWLHRITTNLFLDMVRRRARIRMEALPEDYDRVPADEPNPEQIYHDARLGPDLQAALASLPPEFRAAVVLCDIEGLSYEEIGATLGVKLGTVRSRIHRGRQALRDYLAAHPEHGECAVHVNPVR.

Residues 87-153 (LVRQHADRVY…FLDMVRRRAR (67 aa)) are sigma-70 factor domain-2. A Polymerase core binding motif is present at residues 111–114 (DLTQ). Positions 186 to 236 (LQAALASLPPEFRAAVVLCDIEGLSYEEIGATLGVKLGTVRSRIHRGRQAL) are sigma-70 factor domain-4. The segment at residues 211-230 (YEEIGATLGVKLGTVRSRIH) is a DNA-binding region (H-T-H motif).

The protein belongs to the sigma-70 factor family. ECF subfamily. Interacts transiently with the RNA polymerase catalytic core formed by RpoA, RpoB, RpoC and RpoZ (2 alpha, 1 beta, 1 beta' and 1 omega subunit) to form the RNA polymerase holoenzyme that can initiate transcription. Interacts (via sigma-70 factor domain 4) with cognate anti-sigma-E factor RseA under reducing conditions, which stops the sigma factor from functioning.

In terms of biological role, sigma factors are initiation factors that promote the attachment of RNA polymerase to specific initiation sites and are then released. Extracytoplasmic function (ECF) sigma factors are held in an inactive form by an anti-sigma factor until released. Responds to surface stress (H(2)O(2)). The protein is ECF RNA polymerase sigma factor SigE (sigE) of Mycobacterium tuberculosis (strain ATCC 35801 / TMC 107 / Erdman).